We begin with the raw amino-acid sequence, 945 residues long: Kinesin-like protein KIN-UA (945 aa).

The interval 1-54 (MAANGRASVRPVERHGAPPRPAGRSRSVAPPSRRPSPSPSRARPAAADNDGGSD) is disordered. The span at 22–31 (AGRSRSVAPP) shows a compositional bias: low complexity. In terms of domain architecture, Kinesin motor spans 57–399 (RVRVAVRLRP…IMFGQRAMKI (343 aa)). 142–149 (GQTGTGKT) provides a ligand contact to ATP. The D-BOX motif lies at 369 to 377 (RTSLIVTIG). The stretch at 415-644 (YKKVEHEVDH…ILRLKQSLAD (230 aa)) forms a coiled coil. 4 ARM repeats span residues 683-722 (RSNI…NLAA), 724-764 (DVNQ…NLAM), 766-806 (GSNQ…NLCG), and 808-847 (EKLH…NFAK).

The protein belongs to the TRAFAC class myosin-kinesin ATPase superfamily. Kinesin family. Ungrouped subfamily.

It is found in the cytoplasm. Its subcellular location is the cytoskeleton. This is Kinesin-like protein KIN-UA from Oryza sativa subsp. japonica (Rice).